The following is a 533-amino-acid chain: Probable protein kinase UbiB (533 aa).

The chain crosses the membrane as a helical span at residues 24–44 (LILELPMLPWWLRLLGAALPW). One can recognise a Protein kinase domain in the interval 126 to 494 (RFEREPLASA…WKSSRHDWLG (369 aa)). ATP is bound by residues 132–140 (LASASVAQV) and K154. Catalysis depends on D289, which acts as the Proton acceptor. A helical membrane pass occupies residues 510 to 530 (LGQQLEAWPAWVMLAGGVFLI).

Belongs to the ABC1 family. UbiB subfamily.

The protein localises to the cell inner membrane. Its pathway is cofactor biosynthesis; ubiquinone biosynthesis [regulation]. In terms of biological role, is probably a protein kinase regulator of UbiI activity which is involved in aerobic coenzyme Q (ubiquinone) biosynthesis. The chain is Probable protein kinase UbiB from Pseudomonas paraeruginosa (strain DSM 24068 / PA7) (Pseudomonas aeruginosa (strain PA7)).